The sequence spans 242 residues: Biosynthetic peptidoglycan transglycosylase (242 aa).

A helical membrane pass occupies residues 19–39; sequence ILAALAVFWGGGIALFSVVPV.

It belongs to the glycosyltransferase 51 family.

The protein localises to the cell inner membrane. It catalyses the reaction [GlcNAc-(1-&gt;4)-Mur2Ac(oyl-L-Ala-gamma-D-Glu-L-Lys-D-Ala-D-Ala)](n)-di-trans,octa-cis-undecaprenyl diphosphate + beta-D-GlcNAc-(1-&gt;4)-Mur2Ac(oyl-L-Ala-gamma-D-Glu-L-Lys-D-Ala-D-Ala)-di-trans,octa-cis-undecaprenyl diphosphate = [GlcNAc-(1-&gt;4)-Mur2Ac(oyl-L-Ala-gamma-D-Glu-L-Lys-D-Ala-D-Ala)](n+1)-di-trans,octa-cis-undecaprenyl diphosphate + di-trans,octa-cis-undecaprenyl diphosphate + H(+). It participates in cell wall biogenesis; peptidoglycan biosynthesis. In terms of biological role, peptidoglycan polymerase that catalyzes glycan chain elongation from lipid-linked precursors. The sequence is that of Biosynthetic peptidoglycan transglycosylase from Salmonella paratyphi B (strain ATCC BAA-1250 / SPB7).